Consider the following 568-residue polypeptide: 2-succinyl-5-enolpyruvyl-6-hydroxy-3-cyclohexene-1-carboxylate synthase (568 aa).

This sequence belongs to the TPP enzyme family. MenD subfamily. In terms of assembly, homodimer. Mg(2+) serves as cofactor. It depends on Mn(2+) as a cofactor. The cofactor is thiamine diphosphate.

The catalysed reaction is isochorismate + 2-oxoglutarate + H(+) = 5-enolpyruvoyl-6-hydroxy-2-succinyl-cyclohex-3-ene-1-carboxylate + CO2. It functions in the pathway quinol/quinone metabolism; 1,4-dihydroxy-2-naphthoate biosynthesis; 1,4-dihydroxy-2-naphthoate from chorismate: step 2/7. The protein operates within quinol/quinone metabolism; menaquinone biosynthesis. Catalyzes the thiamine diphosphate-dependent decarboxylation of 2-oxoglutarate and the subsequent addition of the resulting succinic semialdehyde-thiamine pyrophosphate anion to isochorismate to yield 2-succinyl-5-enolpyruvyl-6-hydroxy-3-cyclohexene-1-carboxylate (SEPHCHC). In Haemophilus influenzae (strain 86-028NP), this protein is 2-succinyl-5-enolpyruvyl-6-hydroxy-3-cyclohexene-1-carboxylate synthase.